The primary structure comprises 217 residues: Casparian strip membrane protein 6 (217 aa).

Over 1 to 57 (MEEAKHIEAVEAKQIEAEEAQRIKAGEAKQIEAGETSRSSRKVITFEPKLVINKGIS) the chain is Cytoplasmic. A helical membrane pass occupies residues 58 to 78 (VLGFVLRLFAVFGTIGSALAM). At 79–103 (GTTHESVVSLSQLVLLKVKYSDLPT) the chain is on the extracellular side. A helical membrane pass occupies residues 104–124 (LMFFVVANAIAGGYLVLSLPV). At 125-138 (SIFHIFSTKAKTSR) the chain is on the cytoplasmic side. The chain crosses the membrane as a helical span at residues 139 to 159 (IILLVIDTVMLALVSSGASAA). At 160-191 (TATVYLAHEGNTTANWPPICQQFDGFCERISG) the chain is on the extracellular side. N-linked (GlcNAc...) asparagine glycosylation occurs at asparagine 170. A helical transmembrane segment spans residues 192-212 (SLIGSFCAVILLMLIVINSAI). Residues 213–217 (SLSRH) lie on the Cytoplasmic side of the membrane.

It belongs to the Casparian strip membrane proteins (CASP) family. Homodimer and heterodimers.

Its subcellular location is the cell membrane. Regulates membrane-cell wall junctions and localized cell wall deposition. Required for establishment of the Casparian strip membrane domain (CSD) and the subsequent formation of Casparian strips, a cell wall modification of the root endodermis that determines an apoplastic barrier between the intraorganismal apoplasm and the extraorganismal apoplasm and prevents lateral diffusion. The polypeptide is Casparian strip membrane protein 6 (Arabidopsis lyrata subsp. lyrata (Lyre-leaved rock-cress)).